Here is a 124-residue protein sequence, read N- to C-terminus: Large ribosomal subunit protein bL21 (124 aa).

It belongs to the bacterial ribosomal protein bL21 family. In terms of assembly, part of the 50S ribosomal subunit. Contacts protein L20.

Its function is as follows. This protein binds to 23S rRNA in the presence of protein L20. The sequence is that of Large ribosomal subunit protein bL21 from Sinorhizobium medicae (strain WSM419) (Ensifer medicae).